Reading from the N-terminus, the 102-residue chain is Small ribosomal subunit protein uS10 (102 aa).

It belongs to the universal ribosomal protein uS10 family. Part of the 30S ribosomal subunit.

Its function is as follows. Involved in the binding of tRNA to the ribosomes. This is Small ribosomal subunit protein uS10 from Bifidobacterium longum (strain DJO10A).